Here is a 78-residue protein sequence, read N- to C-terminus: Small ribosomal subunit protein bS16c (78 aa).

The protein belongs to the bacterial ribosomal protein bS16 family.

Its subcellular location is the plastid. The protein localises to the chloroplast. This chain is Small ribosomal subunit protein bS16c, found in Amborella trichopoda.